The sequence spans 565 residues: Receptor-like serine/threonine-protein kinase NCRK (565 aa).

Residues 1–23 (MKMRVETALAILLVLISIQQCYG) form the signal peptide. The Extracellular portion of the chain corresponds to 24-103 (GVSNYTCTCF…SKKQYLSRKL (80 aa)). N27, N37, N45, N77, and N85 each carry an N-linked (GlcNAc...) asparagine glycan. Residues 104 to 124 (VIVILLFCGVLISLAFLASMI) traverse the membrane as a helical segment. Topologically, residues 125 to 565 (CYICRKDKFS…PVLLEPSAHI (441 aa)) are cytoplasmic. A Protein kinase domain is found at 210 to 495 (FSSNSVIGHG…REVVQILSTI (286 aa)). ATP is bound by residues 216–224 (IGHGGSSCV) and K238. D339 serves as the catalytic Proton acceptor. T378 and T383 each carry phosphothreonine. Y391 is subject to Phosphotyrosine.

This sequence belongs to the protein kinase superfamily. Ser/Thr protein kinase family. In terms of assembly, interacts with ARAC5. Post-translationally, phosphorylated. As to expression, mostly expressed in leaf primordia, root and shoot apical meristems, lateral root primordia, and stele of older roots and hypocotyls. In leaves and cotyledons, highest levels observed in trichomes, vasculatures, and hydathode endothem.

The protein resides in the cell membrane. Its subcellular location is the prevacuolar compartment membrane. It localises to the endosome. The enzyme catalyses L-seryl-[protein] + ATP = O-phospho-L-seryl-[protein] + ADP + H(+). The catalysed reaction is L-threonyl-[protein] + ATP = O-phospho-L-threonyl-[protein] + ADP + H(+). This is Receptor-like serine/threonine-protein kinase NCRK (NCRK) from Arabidopsis thaliana (Mouse-ear cress).